A 317-amino-acid polypeptide reads, in one-letter code: MNQLDALRQYTTVVADTGDFHQLAQFQPRDATTNPSLILKAVQKPEYAPLMRATVAQYKGRSLDEVMDRMLVRFGCEILNTIPGRVSTEVDARLSFNTSATVARAERLIELYQAEGVHIDRVLIKIASTWEGIEAARQLELRGIHTNLTLLFSFCQAVACGQAKVQLISPFVGRIYDWYKKQAGAQWDEAAMAGANDPGVRSVRAIYEHYKHFGIATEVMGASFRNTGQIVALAGCDLLTIAPELLAQLGASDAPLSRALDPEAARTLELDPVHYDEAGFRLALNEDAMGTEKLAEGIRAFAADTRKLEALMQQAAD.

The active-site Schiff-base intermediate with substrate is lysine 125.

It belongs to the transaldolase family. Type 1 subfamily. As to quaternary structure, homodimer.

It is found in the cytoplasm. The catalysed reaction is D-sedoheptulose 7-phosphate + D-glyceraldehyde 3-phosphate = D-erythrose 4-phosphate + beta-D-fructose 6-phosphate. The protein operates within carbohydrate degradation; pentose phosphate pathway; D-glyceraldehyde 3-phosphate and beta-D-fructose 6-phosphate from D-ribose 5-phosphate and D-xylulose 5-phosphate (non-oxidative stage): step 2/3. Functionally, transaldolase is important for the balance of metabolites in the pentose-phosphate pathway. This chain is Transaldolase, found in Delftia acidovorans (strain DSM 14801 / SPH-1).